Consider the following 472-residue polypeptide: Methanethiol oxidase (472 aa).

Belongs to the selenium-binding protein family.

It localises to the nucleus. The protein localises to the cytoplasm. It is found in the cytosol. The protein resides in the membrane. The catalysed reaction is methanethiol + O2 + H2O = hydrogen sulfide + formaldehyde + H2O2 + H(+). The protein operates within organosulfur degradation. Its function is as follows. Catalyzes the oxidation of methanethiol, an organosulfur compound known to be produced in substantial amounts by gut bacteria. Selenium-binding protein which may be involved in the sensing of reactive xenobiotics in the cytoplasm. May be involved in intra-Golgi protein transport. In Xenopus laevis (African clawed frog), this protein is Methanethiol oxidase (selenbp1-a).